We begin with the raw amino-acid sequence, 176 residues long: Small ribosomal subunit protein uS5 (176 aa).

The 64-residue stretch at 11-74 (LSEVLVDVNR…QAAKKRMMKV (64 aa)) folds into the S5 DRBM domain.

It belongs to the universal ribosomal protein uS5 family. As to quaternary structure, part of the 30S ribosomal subunit. Contacts proteins S4 and S8.

Functionally, with S4 and S12 plays an important role in translational accuracy. In terms of biological role, located at the back of the 30S subunit body where it stabilizes the conformation of the head with respect to the body. The protein is Small ribosomal subunit protein uS5 of Rickettsia akari (strain Hartford).